The chain runs to 598 residues: UvrABC system protein C (598 aa).

One can recognise a GIY-YIG domain in the interval 14 to 91; the sequence is DQPGCYLMKD…IHKNNPKYNI (78 aa). Positions 196–231 constitute a UVR domain; it reads TEIQDRLQEKMAYAAAHMEFEKAAEFRDQIKAIETV.

It belongs to the UvrC family. As to quaternary structure, interacts with UvrB in an incision complex.

It localises to the cytoplasm. Its function is as follows. The UvrABC repair system catalyzes the recognition and processing of DNA lesions. UvrC both incises the 5' and 3' sides of the lesion. The N-terminal half is responsible for the 3' incision and the C-terminal half is responsible for the 5' incision. The polypeptide is UvrABC system protein C (Enterococcus faecalis (strain ATCC 700802 / V583)).